The sequence spans 907 residues: Protein translocase subunit SecA (907 aa).

Residues glutamine 87, 105–109 (GEGKT), and aspartate 513 each bind ATP. The span at 841–853 (EAQRRAQAEEAAR) shows a compositional bias: basic and acidic residues. A disordered region spans residues 841-907 (EAQRRAQAEE…KYKQCHGQIN (67 aa)). Positions 854 to 865 (RAQAQHASAQSQ) are enriched in low complexity. Over residues 872–887 (EGHHQPVVRDERKVGR) the composition is skewed to basic and acidic residues. Positions 891, 893, 902, and 903 each coordinate Zn(2+).

The protein belongs to the SecA family. In terms of assembly, monomer and homodimer. Part of the essential Sec protein translocation apparatus which comprises SecA, SecYEG and auxiliary proteins SecDF-YajC and YidC. It depends on Zn(2+) as a cofactor.

The protein resides in the cell inner membrane. The protein localises to the cytoplasm. It catalyses the reaction ATP + H2O + cellular proteinSide 1 = ADP + phosphate + cellular proteinSide 2.. Part of the Sec protein translocase complex. Interacts with the SecYEG preprotein conducting channel. Has a central role in coupling the hydrolysis of ATP to the transfer of proteins into and across the cell membrane, serving both as a receptor for the preprotein-SecB complex and as an ATP-driven molecular motor driving the stepwise translocation of polypeptide chains across the membrane. The polypeptide is Protein translocase subunit SecA (Vibrio vulnificus (strain CMCP6)).